The primary structure comprises 210 residues: Protein-L-isoaspartate O-methyltransferase (210 aa).

Residue S60 is part of the active site.

The protein belongs to the methyltransferase superfamily. L-isoaspartyl/D-aspartyl protein methyltransferase family.

The protein localises to the cytoplasm. It carries out the reaction [protein]-L-isoaspartate + S-adenosyl-L-methionine = [protein]-L-isoaspartate alpha-methyl ester + S-adenosyl-L-homocysteine. Functionally, catalyzes the methyl esterification of L-isoaspartyl residues in peptides and proteins that result from spontaneous decomposition of normal L-aspartyl and L-asparaginyl residues. It plays a role in the repair and/or degradation of damaged proteins. This chain is Protein-L-isoaspartate O-methyltransferase, found in Xylella fastidiosa (strain M12).